Reading from the N-terminus, the 37-residue chain is Photosystem II reaction center protein Psb30 (37 aa).

The helical transmembrane segment at 10-30 threads the bilayer; that stretch reads LISLLLLTLIMLAGPAVIALW.

It belongs to the Psb30/Ycf12 family. In terms of assembly, PSII is composed of 1 copy each of membrane proteins PsbA, PsbB, PsbC, PsbD, PsbE, PsbF, PsbH, PsbI, PsbJ, PsbK, PsbL, PsbM, PsbT, PsbX, Psb30/Ycf12, peripheral proteins PsbO, CyanoQ (PsbQ), PsbU, PsbV and a large number of cofactors. It forms dimeric complexes.

It is found in the cell inner membrane. A core subunit of photosystem II (PSII), probably helps stabilize the reaction center. In Gloeobacter violaceus (strain ATCC 29082 / PCC 7421), this protein is Photosystem II reaction center protein Psb30.